A 473-amino-acid chain; its full sequence is Cytochrome P450 716A2 (473 aa).

A helical membrane pass occupies residues 1 to 21 (MYLTIIFLFISSIIFPLLFFL). Position 420 (Cys-420) interacts with heme.

It belongs to the cytochrome P450 family. The cofactor is heme.

It localises to the membrane. Its function is as follows. Possesses triterpene oxidizing activity. Catalyzes the C28 hydroxylation of alpha-amyrin, beta-amyrin, and lupeol, producing uvaol, erythrodiol, and betulin, respectively. Catalyzes the C28 carboxylation of alpha- and beta-amyrin. Possesses 22alpha-hydroxylation activity against alpha- and beta-amaryn. The polypeptide is Cytochrome P450 716A2 (Arabidopsis thaliana (Mouse-ear cress)).